The primary structure comprises 415 residues: Lipid-A-disaccharide synthase (415 aa).

Residues 1–21 (MNSLPESGSDGQSSADPSQKA) are disordered.

This sequence belongs to the LpxB family.

It carries out the reaction a lipid X + a UDP-2-N,3-O-bis[(3R)-3-hydroxyacyl]-alpha-D-glucosamine = a lipid A disaccharide + UDP + H(+). The protein operates within bacterial outer membrane biogenesis; LPS lipid A biosynthesis. In terms of biological role, condensation of UDP-2,3-diacylglucosamine and 2,3-diacylglucosamine-1-phosphate to form lipid A disaccharide, a precursor of lipid A, a phosphorylated glycolipid that anchors the lipopolysaccharide to the outer membrane of the cell. In Gluconobacter oxydans (strain 621H) (Gluconobacter suboxydans), this protein is Lipid-A-disaccharide synthase.